The following is a 425-amino-acid chain: Aspyridones cluster regulator (425 aa).

A DNA-binding region (zn(2)-C6 fungal-type) is located at residues 100-127 (CVDCRASKTRCTGEPEGCKRCTFRKRPC). The segment at 132 to 159 (LRRSNTTQHGEQIEASSSTFTMSDEQGS) is disordered. Residues 133-157 (RRSNTTQHGEQIEASSSTFTMSDEQ) show a composition bias toward polar residues.

Its subcellular location is the nucleus. Functionally, transcription factor involved in regulation of gene cluster that mediates the biosynthesis of aphidicolin. This chain is Aspyridones cluster regulator (TF), found in Neocamarosporium betae (Beet black rot fungus).